We begin with the raw amino-acid sequence, 74 residues long: UPF0352 protein MS1910 (74 aa).

Belongs to the UPF0352 family.

This chain is UPF0352 protein MS1910, found in Mannheimia succiniciproducens (strain KCTC 0769BP / MBEL55E).